The following is a 338-amino-acid chain: 4'-phosphopantetheinyl transferase (338 aa).

The protein belongs to the P-Pant transferase superfamily.

The enzyme catalyses apo-[ACP] + CoA = holo-[ACP] + adenosine 3',5'-bisphosphate + H(+). Acyl-carrier-protein synthase that transfers the 4'-phosphopantetheine moiety from coenzyme A to a Ser of an acyl-carrier-protein. The 4'-phosphopantetheine (4'-PPT) portion of CoA provides the essential prosthetic group for a number of carrier proteins and multi-domain enzymes, priming them for the acceptance of acyl building blocks in fatty acid synthesis and many aspects of secondary metabolism mediated by polyketide synthases (PKSs) and non-ribosomal peptide synthetases (NRPSs). Plays a key role in liamocins biosynthesis by activationg the HR-PKS PKS1 that produces 3,5-dihydroxydecanoic acid, a precursor of liamocins. In Aureobasidium melanogenum (Aureobasidium pullulans var. melanogenum), this protein is 4'-phosphopantetheinyl transferase.